Reading from the N-terminus, the 261-residue chain is Prostatic glandular kallikrein-6 (261 aa).

The first 18 residues, 1–18 (MWLLILFLILSLGWNDAA), serve as a signal peptide directing secretion. Positions 19 to 24 (PPGQSR) are cleaved as a propeptide — activation peptide. A Peptidase S1 domain is found at 25 to 258 (IIGGFNCEKN…FTSWMKKVMK (234 aa)). Disulfide bonds link Cys31–Cys173, Cys50–Cys66, Cys152–Cys219, Cys184–Cys198, and Cys209–Cys234. His65 (charge relay system) is an active-site residue. The N-linked (GlcNAc...) asparagine glycan is linked to Asn108. Residue Asp120 is the Charge relay system of the active site. Ser213 functions as the Charge relay system in the catalytic mechanism.

Belongs to the peptidase S1 family. Kallikrein subfamily.

It catalyses the reaction Preferential cleavage of Arg-|-Xaa bonds in small molecule substrates. Highly selective action to release kallidin (lysyl-bradykinin) from kininogen involves hydrolysis of Met-|-Xaa or Leu-|-Xaa.. Its function is as follows. Glandular kallikreins cleave Met-Lys and Arg-Ser bonds in kininogen to release Lys-bradykinin. This is Prostatic glandular kallikrein-6 (Klk6) from Rattus norvegicus (Rat).